We begin with the raw amino-acid sequence, 376 residues long: Aminomethyltransferase (376 aa).

The protein belongs to the GcvT family. As to quaternary structure, the glycine cleavage system is composed of four proteins: P, T, L and H.

The catalysed reaction is N(6)-[(R)-S(8)-aminomethyldihydrolipoyl]-L-lysyl-[protein] + (6S)-5,6,7,8-tetrahydrofolate = N(6)-[(R)-dihydrolipoyl]-L-lysyl-[protein] + (6R)-5,10-methylene-5,6,7,8-tetrahydrofolate + NH4(+). Its function is as follows. The glycine cleavage system catalyzes the degradation of glycine. The sequence is that of Aminomethyltransferase from Nostoc sp. (strain PCC 7120 / SAG 25.82 / UTEX 2576).